We begin with the raw amino-acid sequence, 1493 residues long: ABC transporter C family member 7 (1493 aa).

10 consecutive transmembrane segments (helical) span residues 21–41, 70–90, 102–122, 140–160, 165–185, 309–329, 343–360, 423–443, 448–468, and 535–555; these read FPMF…GSCV, VVIC…LSCF, LMIL…SFYI, VWWV…IALY, LVSV…LFLC, ILLS…APYL, YSNQ…AKLV, WYMH…LILY, LGSI…IPLA, and SVLW…CMLL. Positions 309-590 constitute an ABC transmembrane type-1 1 domain; the sequence is ILLSTLFAFV…LPDTISMIVQ (282 aa). Positions 624–847 constitute an ABC transporter 1 domain; sequence VEVSNGAFSW…GTDFMELVGA (224 aa). Residue 659–666 coordinates ATP; the sequence is GTVGSGKS. Residues 863 to 898 form a disordered region; sequence ASAQSTTSKESKVSNDEEKQEEDLPSPKGQLVQEEE. At Ser-888 the chain carries Phosphoserine. Transmembrane regions (helical) follow at residues 915–935, 959–979, 1038–1055, 1059–1081, 1153–1173, and 1177–1197; these read LAYG…FQVL, GSTL…CILV, FSNL…IGVM, AWQV…QYYI, LSTV…EGVI, and FAGL…TLIW. The ABC transmembrane type-1 2 domain occupies 922–1204; sequence VPIILVVQIL…LIWTLCDLEN (283 aa). The ABC transporter 2 domain maps to 1241–1475; sequence ITICNLQVRY…KSSSFSKLVA (235 aa). 1275 to 1282 lines the ATP pocket; it reads GRTGCGKS.

Belongs to the ABC transporter superfamily. ABCC family. Conjugate transporter (TC 3.A.1.208) subfamily. Ubiquitous.

It localises to the membrane. It catalyses the reaction ATP + H2O + xenobioticSide 1 = ADP + phosphate + xenobioticSide 2.. Its function is as follows. Pump for glutathione S-conjugates. This chain is ABC transporter C family member 7 (ABCC7), found in Arabidopsis thaliana (Mouse-ear cress).